The primary structure comprises 148 residues: Copper transport protein ctr6 (148 aa).

The Extracellular portion of the chain corresponds to 1–33 (MNHGGNSTMRHCSMKMTFNTDYDNLCIVFKSWH). A helical transmembrane segment spans residues 34–54 (IGNLSQFLLSLLAIAILGYLF). The Cytoplasmic segment spans residues 55 to 108 (ERLRSFTSLKETEFQRGYAGQQSEGLLTHHSKSLKSGRPFRLCALYAVQLVFSY). The chain crosses the membrane as a helical span at residues 109–129 (FLMLVAMTYNAYVILAIAIGA). Residues 130–148 (AFGYRRSHCDTVQTVGLCH) lie on the Extracellular side of the membrane.

It belongs to the copper transporter (Ctr) (TC 1.A.56) family. SLC31A subfamily. As to quaternary structure, homotrimer.

It localises to the vacuole membrane. Functionally, mobilizes stored copper from the vacuole to the cytoplasm under conditions of copper limitation. The polypeptide is Copper transport protein ctr6 (ctr6) (Schizosaccharomyces pombe (strain 972 / ATCC 24843) (Fission yeast)).